The primary structure comprises 76 residues: MAERPLDVIHKSLDKDVLVILKKGFEFRGKLIGYDIHLNVVLANAELLQDGEVVKKYGKIVIRGDNVLAISPTEEG.

Residues 4-76 (RPLDVIHKSL…VLAISPTEEG (73 aa)) enclose the Sm domain.

The protein belongs to the snRNP Sm proteins family.

This is Putative snRNP Sm-like protein from Pyrococcus furiosus (strain ATCC 43587 / DSM 3638 / JCM 8422 / Vc1).